A 735-amino-acid polypeptide reads, in one-letter code: Photosystem I P700 chlorophyll a apoprotein A2 (735 aa).

A run of 8 helical transmembrane segments spans residues 47–70 (IFAS…FHVA), 136–159 (LYNG…LHLQ), 176–200 (LNHH…HVAI), 274–292 (MAHH…GHMY), 331–354 (LHFQ…QHMY), 370–396 (AALY…IFFI), 418–440 (AIIS…LYVH), and 518–536 (FLVH…LILV). Positions 560 and 569 each coordinate [4Fe-4S] cluster. The next 2 membrane-spanning stretches (helical) occupy residues 576-597 (AFYL…YWHW) and 644-666 (LSVW…MFLI). 3 residues coordinate chlorophyll a: H655, M663, and Y671. W672 is a phylloquinone binding site. The chain crosses the membrane as a helical span at residues 708–728 (LVGLVHFSVGYIFTYAAFLIA).

It belongs to the PsaA/PsaB family. In terms of assembly, the PsaA/B heterodimer binds the P700 chlorophyll special pair and subsequent electron acceptors. PSI consists of a core antenna complex that captures photons, and an electron transfer chain that converts photonic excitation into a charge separation. The eukaryotic PSI reaction center is composed of at least 11 subunits. It depends on P700 is a chlorophyll a/chlorophyll a' dimer, A0 is one or more chlorophyll a, A1 is one or both phylloquinones and FX is a shared 4Fe-4S iron-sulfur center. as a cofactor.

It is found in the plastid. Its subcellular location is the chloroplast thylakoid membrane. It catalyses the reaction reduced [plastocyanin] + hnu + oxidized [2Fe-2S]-[ferredoxin] = oxidized [plastocyanin] + reduced [2Fe-2S]-[ferredoxin]. Functionally, psaA and PsaB bind P700, the primary electron donor of photosystem I (PSI), as well as the electron acceptors A0, A1 and FX. PSI is a plastocyanin/cytochrome c6-ferredoxin oxidoreductase, converting photonic excitation into a charge separation, which transfers an electron from the donor P700 chlorophyll pair to the spectroscopically characterized acceptors A0, A1, FX, FA and FB in turn. Oxidized P700 is reduced on the lumenal side of the thylakoid membrane by plastocyanin or cytochrome c6. This is Photosystem I P700 chlorophyll a apoprotein A2 from Stigeoclonium helveticum (Green alga).